A 687-amino-acid chain; its full sequence is Hemin receptor (687 aa).

The N-terminal stretch at 1 to 28 (MPRSTSDRFRWSPLSLAIACTLSLAVQA) is a signal peptide. The TonB box motif lies at 44 to 51 (DTMVVTAT). Residues 56–167 (SSFEAPMMVT…LGGVISYETV (112 aa)) form the TBDR plug domain. A TBDR beta-barrel domain is found at 178 to 687 (NSGYRVYSAA…NAKFFVSYQW (510 aa)). The segment at 319-338 (ARPQGTPEEGRKQTTKGGKL) is disordered. Over residues 326–338 (EEGRKQTTKGGKL) the composition is skewed to basic and acidic residues. Residues 670-687 (QGVPQDGRNAKFFVSYQW) carry the TonB C-terminal box motif.

This sequence belongs to the TonB-dependent receptor family.

It is found in the cell outer membrane. In terms of biological role, this protein is involved in the initial step of iron uptake by binding hemin, an iron chelatin siderophore that allows the bacteria to extract iron from the environment. The sequence is that of Hemin receptor (hemR) from Yersinia enterocolitica.